We begin with the raw amino-acid sequence, 55 residues long: MRLFDPWPVFFKREWKRCWPFLTGFAVTGVLITKLTAGLTEEDAKNSKFVQQHRR.

The transit peptide at 1–11 directs the protein to the mitochondrion; the sequence is MRLFDPWPVFF. Residues 21 to 39 traverse the membrane as a helical segment; sequence FLTGFAVTGVLITKLTAGL.

The protein belongs to the ATPase 6 subunit family.

Its subcellular location is the mitochondrion inner membrane. Its function is as follows. Mitochondrial membrane ATP synthase (F(1)F(0) ATP synthase or Complex V) produces ATP from ADP in the presence of a proton gradient across the membrane which is generated by electron transport complexes of the respiratory chain. F-type ATPases consist of two structural domains, F(1) - containing the extramembraneous catalytic core and F(0) - containing the membrane proton channel, linked together by a central stalk and a peripheral stalk. During catalysis, ATP synthesis in the catalytic domain of F(1) is coupled via a rotary mechanism of the central stalk subunits to proton translocation. Part of the complex F(0) domain. Confers tolerance to several abiotic stresses (e.g. salt, mannitol, drought, oxidative and cold stresses), probably by providing additional energy needed for cell homeostasis. This Arabidopsis thaliana (Mouse-ear cress) protein is ATP synthase small subunit 6-A, mitochondrial.